The chain runs to 458 residues: Adenylosuccinate synthetase (458 aa).

GTP contacts are provided by residues 17 to 23 (GDEGKGK) and 45 to 47 (GHT). Asp18 serves as the catalytic Proton acceptor. Asp18 and Gly45 together coordinate Mg(2+). Residues 18–21 (DEGK), 43–46 (NAGH), Thr137, Arg151, Gln247, Thr262, and Arg330 contribute to the IMP site. The active-site Proton donor is His46. Position 326 to 332 (326 to 332 (VTTGRSR)) interacts with substrate. GTP-binding positions include Arg332, 358-360 (KLD), and 440-442 (STS).

The protein belongs to the adenylosuccinate synthetase family. In terms of assembly, homodimer. Mg(2+) serves as cofactor.

The protein localises to the cytoplasm. The enzyme catalyses IMP + L-aspartate + GTP = N(6)-(1,2-dicarboxyethyl)-AMP + GDP + phosphate + 2 H(+). It functions in the pathway purine metabolism; AMP biosynthesis via de novo pathway; AMP from IMP: step 1/2. Functionally, plays an important role in the de novo pathway of purine nucleotide biosynthesis. Catalyzes the first committed step in the biosynthesis of AMP from IMP. The chain is Adenylosuccinate synthetase from Acidovorax sp. (strain JS42).